We begin with the raw amino-acid sequence, 144 residues long: Large ribosomal subunit protein uL13 (144 aa).

It belongs to the universal ribosomal protein uL13 family. Part of the 50S ribosomal subunit.

Its function is as follows. This protein is one of the early assembly proteins of the 50S ribosomal subunit, although it is not seen to bind rRNA by itself. It is important during the early stages of 50S assembly. The chain is Large ribosomal subunit protein uL13 from Clostridium novyi (strain NT).